The sequence spans 1048 residues: Cysteine-rich motor neuron 1 protein (1048 aa).

A signal peptide spans 1 to 46 (MYLAAVSAGRRRPGGDGGGGGGGWHLAAAGWLLLLALLLGQPGTRA). Positions 47 to 124 (LVCLPCDESK…EYEVGVCEDE (78 aa)) constitute an IGFBP N-terminal domain. Residues 47-952 (LVCLPCDESK…HPSEDASVSS (906 aa)) are Extracellular-facing. 4 disulfide bridges follow: Cys49-Cys72, Cys52-Cys74, Cys57-Cys75, and Cys63-Cys78. An N-linked (GlcNAc...) asparagine glycan is attached at Asn83. Intrachain disulfides connect Cys86-Cys102 and Cys96-Cys121. Residues 326-328 (RGD) carry the Cell attachment site motif. 2 consecutive VWFC domains span residues 346–403 (PTCI…PVCE) and 413–469 (AGCY…PVCE). 4 Antistasin-like domains span residues 481–510 (CELLVNCTLTEKDCIYSFKLDQNGCRICQC), 517–544 (CTGLISGCSLDCSFGFQTDAHNCEICQC), 551–576 (CKPIVCDKYCPFGYLKNKHGCEICRC), and 579–604 (CPEMPCGKICPMGFQQNSHGCVICKC). Asn486 carries N-linked (GlcNAc...) asparagine glycosylation. VWFC domains are found at residues 618-675 (GSCL…PSCP) and 689-747 (SICH…PQCP). Residue Asn758 is glycosylated (N-linked (GlcNAc...) asparagine). 2 consecutive VWFC domains span residues 763 to 821 (SYCK…PYCI) and 829 to 886 (VVCH…PMCP). A Cell attachment site motif is present at residues 904–906 (RGD). An N-linked (GlcNAc...) asparagine glycan is attached at Asn913. Residues 953–973 (VALVTVPITIALLVIIVFLLI) traverse the membrane as a helical segment. Topologically, residues 974 to 1048 (NQKKQWIPVS…LQADNFYQTV (75 aa)) are cytoplasmic.

The protein localises to the membrane. Its function is as follows. May play a role in CNS development by interacting with growth factors implicated in motor neuron differentiation and survival. This is Cysteine-rich motor neuron 1 protein (CRIM1) from Gallus gallus (Chicken).